The following is a 356-amino-acid chain: Peptide chain release factor 1 (356 aa).

At glutamine 232 the chain carries N5-methylglutamine. The segment at 281-301 (ERQSSELSADRKAQVGSGDRS) is disordered.

This sequence belongs to the prokaryotic/mitochondrial release factor family. Methylated by PrmC. Methylation increases the termination efficiency of RF1.

It is found in the cytoplasm. Its function is as follows. Peptide chain release factor 1 directs the termination of translation in response to the peptide chain termination codons UAG and UAA. The sequence is that of Peptide chain release factor 1 from Desulfovibrio desulfuricans (strain ATCC 27774 / DSM 6949 / MB).